The primary structure comprises 94 residues: Acylphosphatase (94 aa).

The Acylphosphatase-like domain occupies 5–94; it reads RLTAFVHGHV…PRDVEGFVER (90 aa). Active-site residues include R20 and N38.

Belongs to the acylphosphatase family.

The enzyme catalyses an acyl phosphate + H2O = a carboxylate + phosphate + H(+). This chain is Acylphosphatase (acyP), found in Corynebacterium glutamicum (strain ATCC 13032 / DSM 20300 / JCM 1318 / BCRC 11384 / CCUG 27702 / LMG 3730 / NBRC 12168 / NCIMB 10025 / NRRL B-2784 / 534).